The chain runs to 295 residues: Mycothiol acetyltransferase (295 aa).

N-acetyltransferase domains lie at 4-138 (TEWR…RPLT) and 149-295 (VRIA…YAAN). Aspartate 36 contributes to the 1D-myo-inositol 2-(L-cysteinylamino)-2-deoxy-alpha-D-glucopyranoside binding site. Acetyl-CoA is bound by residues 77 to 79 (LVV) and 85 to 90 (RRGIGA). The 1D-myo-inositol 2-(L-cysteinylamino)-2-deoxy-alpha-D-glucopyranoside site is built by glutamate 176, lysine 217, and glutamate 225. Residues 229–231 (VGV) and 236–242 (QGRGLGY) each bind acetyl-CoA. 1D-myo-inositol 2-(L-cysteinylamino)-2-deoxy-alpha-D-glucopyranoside is bound at residue tyrosine 266. 271–276 (NSAAVN) contributes to the acetyl-CoA binding site.

It belongs to the acetyltransferase family. MshD subfamily. Monomer.

It catalyses the reaction 1D-myo-inositol 2-(L-cysteinylamino)-2-deoxy-alpha-D-glucopyranoside + acetyl-CoA = mycothiol + CoA + H(+). Functionally, catalyzes the transfer of acetyl from acetyl-CoA to desacetylmycothiol (Cys-GlcN-Ins) to form mycothiol. In Mycolicibacterium smegmatis (strain ATCC 700084 / mc(2)155) (Mycobacterium smegmatis), this protein is Mycothiol acetyltransferase (mshD).